The following is a 102-amino-acid chain: Monothiol glutaredoxin-S5 (102 aa).

Positions 1–101 (MENLQKMISE…PMLKRAGALW (101 aa)) constitute a Glutaredoxin domain. [2Fe-2S] cluster is bound at residue cysteine 21. The Responsive for interaction with TGA factors signature appears at 99–102 (ALWL).

It belongs to the glutaredoxin family. CC-type subfamily.

The protein resides in the cytoplasm. Its subcellular location is the nucleus. Its function is as follows. May only reduce GSH-thiol disulfides, but not protein disulfides. The sequence is that of Monothiol glutaredoxin-S5 (GRXS5) from Arabidopsis thaliana (Mouse-ear cress).